A 69-amino-acid chain; its full sequence is MKKFLIFLIKVYRKYISPLKVPCCRFYPTCSQYVLEALQKHGIIKGGFMSIKRILRCNPFCKGGYDPVK.

This sequence belongs to the UPF0161 family.

The protein localises to the cell membrane. Functionally, could be involved in insertion of integral membrane proteins into the membrane. This Clostridium kluyveri (strain NBRC 12016) protein is Putative membrane protein insertion efficiency factor.